A 305-amino-acid chain; its full sequence is Glycine--tRNA ligase alpha subunit (305 aa).

It belongs to the class-II aminoacyl-tRNA synthetase family. In terms of assembly, tetramer of two alpha and two beta subunits.

The protein localises to the cytoplasm. It catalyses the reaction tRNA(Gly) + glycine + ATP = glycyl-tRNA(Gly) + AMP + diphosphate. The polypeptide is Glycine--tRNA ligase alpha subunit (Streptococcus gordonii (strain Challis / ATCC 35105 / BCRC 15272 / CH1 / DL1 / V288)).